A 168-amino-acid polypeptide reads, in one-letter code: Phosphopantetheine adenylyltransferase (168 aa).

Position 9 (T9) interacts with substrate. Residues 9–10 (TF) and H17 each bind ATP. K41, L74, and R88 together coordinate substrate. ATP-binding positions include 89–91 (GLR), E99, and 124–130 (LQPIASR).

It belongs to the bacterial CoaD family. As to quaternary structure, homohexamer. Mg(2+) is required as a cofactor.

It localises to the cytoplasm. The enzyme catalyses (R)-4'-phosphopantetheine + ATP + H(+) = 3'-dephospho-CoA + diphosphate. It participates in cofactor biosynthesis; coenzyme A biosynthesis; CoA from (R)-pantothenate: step 4/5. Functionally, reversibly transfers an adenylyl group from ATP to 4'-phosphopantetheine, yielding dephospho-CoA (dPCoA) and pyrophosphate. This Sphingopyxis alaskensis (strain DSM 13593 / LMG 18877 / RB2256) (Sphingomonas alaskensis) protein is Phosphopantetheine adenylyltransferase.